Consider the following 331-residue polypeptide: 6-phosphogluconolactonase (331 aa).

K287 carries the post-translational modification N6-acetyllysine.

It belongs to the cycloisomerase 2 family.

The enzyme catalyses 6-phospho-D-glucono-1,5-lactone + H2O = 6-phospho-D-gluconate + H(+). It participates in carbohydrate degradation; pentose phosphate pathway; D-ribulose 5-phosphate from D-glucose 6-phosphate (oxidative stage): step 2/3. Functionally, catalyzes the hydrolysis of 6-phosphogluconolactone to 6-phosphogluconate. The sequence is that of 6-phosphogluconolactonase from Escherichia coli (strain SMS-3-5 / SECEC).